The following is a 1343-amino-acid chain: uncharacterized protein (1343 aa).

The helical transmembrane segment at 432–449 (LYVYFVTTKTGVVAFSLL) threads the bilayer.

Belongs to the IIV-6 295L family.

The protein localises to the membrane. This is an uncharacterized protein from Acheta domesticus (House cricket).